The primary structure comprises 251 residues: Flap endonuclease Xni (251 aa).

Residue Asp-104 participates in Mg(2+) binding. Residues 160–249 enclose the 5'-3' exonuclease domain; it reads VQPQQLPDYW…IDGNLQQLRL (90 aa). 5 residues coordinate K(+): Leu-171, Ala-172, Pro-180, Val-182, and Ile-185. Positions 184-189 are interaction with DNA; sequence GIGPKS.

This sequence belongs to the Xni family. It depends on Mg(2+) as a cofactor. Requires K(+) as cofactor.

Has flap endonuclease activity. During DNA replication, flap endonucleases cleave the 5'-overhanging flap structure that is generated by displacement synthesis when DNA polymerase encounters the 5'-end of a downstream Okazaki fragment. The chain is Flap endonuclease Xni from Escherichia coli O81 (strain ED1a).